Here is a 931-residue protein sequence, read N- to C-terminus: Dipeptidyl aminopeptidase A (931 aa).

Residues 1–13 (MSASTHSHKRKNS) show a composition bias toward basic residues. The segment at 1–58 (MSASTHSHKRKNSHLFPQRKSSNSSMDKPFFPNNDSVANTDPQSNENGHTINEIRPTE) is disordered. The Cytoplasmic segment spans residues 1-119 (MSASTHSHKR…GEWSLPEKRS (119 aa)). Residues 33-50 (NNDSVANTDPQSNENGHT) are compositionally biased toward polar residues. A helical; Signal-anchor for type II membrane protein membrane pass occupies residues 120–140 (YVLVFTLIALSVLVLLVILIP). Residues 141 to 931 (SKLLPTKITR…RFDNTEVLHL (791 aa)) are Lumenal-facing. Residue asparagine 377 is glycosylated (N-linked (GlcNAc...) asparagine). Serine 785 functions as the Charge relay system in the catalytic mechanism. Asparagine 814 is a glycosylation site (N-linked (GlcNAc...) asparagine). Active-site charge relay system residues include aspartate 863 and histidine 896.

The protein belongs to the peptidase S9B family.

It localises to the vacuole membrane. Its function is as follows. Responsible for the proteolytic maturation of the alpha-factor precursor. The protein is Dipeptidyl aminopeptidase A (STE13) of Saccharomyces cerevisiae (strain ATCC 204508 / S288c) (Baker's yeast).